The chain runs to 69 residues: Large ribosomal subunit protein uL29 (69 aa).

It belongs to the universal ribosomal protein uL29 family.

In Treponema denticola (strain ATCC 35405 / DSM 14222 / CIP 103919 / JCM 8153 / KCTC 15104), this protein is Large ribosomal subunit protein uL29.